Here is a 654-residue protein sequence, read N- to C-terminus: Fructose-1,6-bisphosphatase class 3 (654 aa).

The segment at 288–307 is disordered; it reads NPAFKPKKRPDKHERLTQRE. The span at 298–307 shows a compositional bias: basic and acidic residues; sequence DKHERLTQRE.

It belongs to the FBPase class 3 family. It depends on Mn(2+) as a cofactor.

The enzyme catalyses beta-D-fructose 1,6-bisphosphate + H2O = beta-D-fructose 6-phosphate + phosphate. Its pathway is carbohydrate biosynthesis; gluconeogenesis. This chain is Fructose-1,6-bisphosphatase class 3, found in Staphylococcus aureus (strain MSSA476).